The chain runs to 558 residues: Urocanate hydratase (558 aa).

NAD(+) is bound by residues 54-55 (GG), Gln132, 178-180 (GMG), Glu198, 244-245 (NA), 265-269 (QTSAH), 275-276 (YL), and Tyr324. Cys412 is an active-site residue. Residue Gly494 coordinates NAD(+).

It belongs to the urocanase family. NAD(+) serves as cofactor.

The protein localises to the cytoplasm. The catalysed reaction is 4-imidazolone-5-propanoate = trans-urocanate + H2O. Its pathway is amino-acid degradation; L-histidine degradation into L-glutamate; N-formimidoyl-L-glutamate from L-histidine: step 2/3. Its function is as follows. Catalyzes the conversion of urocanate to 4-imidazolone-5-propionate. In Acinetobacter baumannii (strain ACICU), this protein is Urocanate hydratase.